The primary structure comprises 486 residues: MRYFRPLSATAMTTVLLLAGTNVRAQPTEPTPASAHRPSISRGHYLAIAADCAACHTNGRDGQFLAGGYAISSPMGNIYSTNITPSKTHGIGNYTLEQFSKALRHGIRADGAQLYPAMPYDAYNRLTDEDVKSLYAYIMTEVKPVDAPSPKTQLPFPFSIRASLGIWKIAARIEGKPYVFDHTHNDDWNRGRYLVDELAHCGECHTPRNFLLAPNQSAYLAGADIGSWRAPNITNAPQSGIGSWSDQDLFQYLKTGKTAHARAAGPMAEAIEHSLQYLPDADISAIVTYLRSVPAKAESGQTVANFEHAGRPSSYSVANANSRRSNSTLTKTTDGAALYEAVCASCHQSDGKGSKDGYYPSLVGNTTTGQLNPNDLIASILYGVDRTTDNHEILMPAFGPDSLVQPLTDEQIATIADYVLSHFGNAQATVSADAVKQVRAGGKQVPLAKLASPGVMLLLGTGGILGAILVVAGLWWLISRRKKRSA.

The signal sequence occupies residues 1 to 25 (MRYFRPLSATAMTTVLLLAGTNVRA). 3 Cytochrome c domains span residues 38-142 (PSIS…MTEV), 186-294 (DDWN…RSVP), and 330-423 (TKTT…LSHF). Cysteine 52, cysteine 55, histidine 56, cysteine 201, cysteine 204, histidine 205, cysteine 343, cysteine 346, and histidine 347 together coordinate heme c. Residues 458–478 (LLGTGGILGAILVVAGLWWLI) form a helical membrane-spanning segment.

In terms of assembly, heterotrimer composed of FdhL, FdhS and FdhC. In terms of processing, binds 3 heme c groups covalently per subunit.

It is found in the cell membrane. Functionally, cytochrome subunit of fructose dehydrogenase, an enzyme that catalyzes the oxidation of D-fructose to produce 5-keto-D-fructose. In the complex, mediates both the electron transfer to ubiquinone and the anchoring of the complex to the membrane. This Gluconobacter japonicus protein is Fructose dehydrogenase cytochrome subunit (fdhC).